The primary structure comprises 591 residues: ATPase family AAA domain-containing protein 3A (591 aa).

The interval 1–52 is disordered; it reads MSWLFGIKGPKGEGTGPPLPLPPAQPGAEGGGDRGAGDRPSPKDKWSNFDPT. N-acetylserine is present on Ser-2. The interval 2 to 49 is required for interaction with the inner surface of the mitochondrial outer membrane; sequence SWLFGIKGPKGEGTGPPLPLPPAQPGAEGGGDRGAGDRPSPKDKWSNF. Topologically, residues 2 to 245 are mitochondrial intermembrane; sequence SWLFGIKGPK…FRAFVTDWDK (244 aa). Residues 31-47 show a composition bias toward basic and acidic residues; that stretch reads GGDRGAGDRPSPKDKWS. A coiled-coil region spans residues 55–216; that stretch reads ERAAKAAREL…REQIRLKAAE (162 aa). The helical transmembrane segment at 246–263 threads the bilayer; that stretch reads VTATVAGLTLLAVGVYSA. Residues 264–586 lie on the Mitochondrial matrix side of the membrane; that stretch reads KNATSVAGRY…DSQTNKPPHP (323 aa). The tract at residues 289–304 is S100B-binding; it reads RISVLEALRHPIQVSR. Residue 351 to 358 participates in ATP binding; it reads GPPGTGKT. Lys-490 is subject to N6-acetyllysine; alternate. Position 490 is an N6-succinyllysine; alternate (Lys-490). An N6-acetyllysine mark is found at Lys-494 and Lys-512. The interval 572 to 591 is disordered; the sequence is KVERPDSQTNKPPHPSLLSC.

It belongs to the AAA ATPase family. As to quaternary structure, can form homooligomers. Homodimer formation at the N-terminus may be regulated by ATP and is required for the interaction with the inner surface of the mitochondrial outer membrane and correct mitochondrial homeostasis. Interacts with components of the mitochondrial ribosome and with other proteins involved in mitochondrial RNA metabolism. May also interact with protein involved in lipid metabolism, including STARD9. May interact with FAM210A. Interacts with GADD45GIP1. Interacts with S100B in a Ca(+2)- and Zn(+2)-dependent manner; this interaction probably occurs in the cytosol prior to mitochondrial targeting. S100B could assist ATAD3A cytoplasmic processing, preventing aggregation and favoring mitochondrial localization. Interacts with HSP60/HSPD1. Interacts with CLPB. Interacts with EIF2AK3/PERK; ATAD3A and EIF2S1/eIF-2-alpha occupy a common binding site within the cytoplasmic loop of EIF2AK3/PERK, leading to prevent EIF2AK3/PERK association with its substrate EIF2S1/eIF-2-alpha. Expressed in heart, spleen, kidney, liver and at smaller levels, in lung and muscle (at protein level).

The protein resides in the mitochondrion inner membrane. The protein localises to the mitochondrion matrix. It is found in the mitochondrion nucleoid. The enzyme catalyses ATP + H2O = ADP + phosphate + H(+). Its function is as follows. Essential for mitochondrial network organization, mitochondrial metabolism and cell growth at organism and cellular level. May play an important role in mitochondrial protein synthesis. May also participate in mitochondrial DNA replication. May bind to mitochondrial DNA D-loops and contribute to nucleoid stability. Required for enhanced channeling of cholesterol for hormone-dependent steroidogenesis. Involved in mitochondrial-mediated antiviral innate immunity. Required to protect mitochondria from the PERK-mediated unfolded protein response: specifically inhibits the activity of EIF2AK3/PERK at mitochondria-endoplasmic reticulum contact sites, thereby providing a safe haven for mitochondrial protein translation during endoplasmic reticulum stress. Ability to inhibit EIF2AK3/PERK is independent of its ATPase activity. Also involved in the mitochondrial DNA damage response by promoting signaling between damaged genomes and the mitochondrial membrane, leading to activation of the integrated stress response (ISR). This is ATPase family AAA domain-containing protein 3A (Atad3a) from Mus musculus (Mouse).